The primary structure comprises 188 residues: dCTP deaminase (188 aa).

Residues 111-116, 135-137, Gln156, Tyr170, and Gln180 each bind dCTP; these read KSTYAR and TLE. The active-site Proton donor/acceptor is Glu137.

It belongs to the dCTP deaminase family. Homotrimer.

The enzyme catalyses dCTP + H2O + H(+) = dUTP + NH4(+). Its pathway is pyrimidine metabolism; dUMP biosynthesis; dUMP from dCTP (dUTP route): step 1/2. Functionally, catalyzes the deamination of dCTP to dUTP. This is dCTP deaminase from Thioalkalivibrio sulfidiphilus (strain HL-EbGR7).